The sequence spans 237 residues: V-type proton ATPase subunit E3 (237 aa).

N-acetylmethionine is present on M1. The stretch at 9–67 (QIQQMVRFIRQEAEEKANEISISSEEEFNIEKLQLVEAEKKKIRQEYEKKEKQVDVRKK) forms a coiled coil.

The protein belongs to the V-ATPase E subunit family. In terms of assembly, V-ATPase is a heteromultimeric enzyme composed of a peripheral catalytic V1 complex (components A to H) attached to an integral membrane V0 proton pore complex (components: a, c, c'', d and e).

It is found in the vacuole membrane. In terms of biological role, subunit of the peripheral V1 complex of vacuolar ATPase essential for assembly or catalytic function. V-ATPase is responsible for acidifying a variety of intracellular compartments in eukaryotic cells. This is V-type proton ATPase subunit E3 (VHA-E3) from Arabidopsis thaliana (Mouse-ear cress).